The sequence spans 347 residues: NADH-ubiquinone oxidoreductase chain 2 (347 aa).

11 helical membrane passes run 1–21 (MNPL…SIIL), 25–45 (HWFM…PVLM), 59–79 (YFLT…INLM), 96–116 (LLIT…FWVP), 122–142 (VSLQ…LAVM), 145–165 (IFAS…IMIG), 178–198 (IMAY…IYNP), 200–220 (LMLL…MMFM), 242–262 (VLMM…GFMP), 274–294 (NSVI…FFYM), and 325–345 (LLAP…MFIL).

This sequence belongs to the complex I subunit 2 family. In terms of assembly, core subunit of respiratory chain NADH dehydrogenase (Complex I) which is composed of 45 different subunits. Interacts with TMEM242.

Its subcellular location is the mitochondrion inner membrane. The catalysed reaction is a ubiquinone + NADH + 5 H(+)(in) = a ubiquinol + NAD(+) + 4 H(+)(out). Core subunit of the mitochondrial membrane respiratory chain NADH dehydrogenase (Complex I) which catalyzes electron transfer from NADH through the respiratory chain, using ubiquinone as an electron acceptor. Essential for the catalytic activity and assembly of complex I. The chain is NADH-ubiquinone oxidoreductase chain 2 from Myosorex kihaulei (Kihaule's mouse shrew).